Here is a 358-residue protein sequence, read N- to C-terminus: Methylthioribose-1-phosphate isomerase (358 aa).

Substrate contacts are provided by residues 54 to 56 (RGA), R96, and Q205. D246 (proton donor) is an active-site residue. 256-257 (NK) is a substrate binding site.

The protein belongs to the eIF-2B alpha/beta/delta subunits family. MtnA subfamily.

It catalyses the reaction 5-(methylsulfanyl)-alpha-D-ribose 1-phosphate = 5-(methylsulfanyl)-D-ribulose 1-phosphate. It functions in the pathway amino-acid biosynthesis; L-methionine biosynthesis via salvage pathway; L-methionine from S-methyl-5-thio-alpha-D-ribose 1-phosphate: step 1/6. In terms of biological role, catalyzes the interconversion of methylthioribose-1-phosphate (MTR-1-P) into methylthioribulose-1-phosphate (MTRu-1-P). The polypeptide is Methylthioribose-1-phosphate isomerase (Pseudomonas aeruginosa (strain UCBPP-PA14)).